Here is a 779-residue protein sequence, read N- to C-terminus: Phosphoribosylformylglycinamidine synthase subunit PurL (779 aa).

Histidine 52 is a catalytic residue. Positions 55 and 94 each coordinate ATP. A Mg(2+)-binding site is contributed by glutamate 96. Substrate contacts are provided by residues 97-100 (SHNH) and arginine 119. The Proton acceptor role is filled by histidine 98. Residue aspartate 120 coordinates Mg(2+). Residue glutamine 243 coordinates substrate. Residue aspartate 271 coordinates Mg(2+). 315–317 (ESQ) provides a ligand contact to substrate. 2 residues coordinate ATP: asparagine 523 and glycine 560. Asparagine 561 contributes to the Mg(2+) binding site. Serine 563 is a binding site for substrate.

The protein belongs to the FGAMS family. As to quaternary structure, monomer. Part of the FGAM synthase complex composed of 1 PurL, 1 PurQ and 2 PurS subunits.

The protein localises to the cytoplasm. It carries out the reaction N(2)-formyl-N(1)-(5-phospho-beta-D-ribosyl)glycinamide + L-glutamine + ATP + H2O = 2-formamido-N(1)-(5-O-phospho-beta-D-ribosyl)acetamidine + L-glutamate + ADP + phosphate + H(+). It participates in purine metabolism; IMP biosynthesis via de novo pathway; 5-amino-1-(5-phospho-D-ribosyl)imidazole from N(2)-formyl-N(1)-(5-phospho-D-ribosyl)glycinamide: step 1/2. In terms of biological role, part of the phosphoribosylformylglycinamidine synthase complex involved in the purines biosynthetic pathway. Catalyzes the ATP-dependent conversion of formylglycinamide ribonucleotide (FGAR) and glutamine to yield formylglycinamidine ribonucleotide (FGAM) and glutamate. The FGAM synthase complex is composed of three subunits. PurQ produces an ammonia molecule by converting glutamine to glutamate. PurL transfers the ammonia molecule to FGAR to form FGAM in an ATP-dependent manner. PurS interacts with PurQ and PurL and is thought to assist in the transfer of the ammonia molecule from PurQ to PurL. In Prochlorococcus marinus (strain MIT 9312), this protein is Phosphoribosylformylglycinamidine synthase subunit PurL.